The chain runs to 1288 residues: Mitogen-activated protein kinase kinase kinase 6 (1288 aa).

The region spanning Thr648–Leu906 is the Protein kinase domain. Residues Leu654–Val662 and Lys677 contribute to the ATP site. The active-site Proton acceptor is the Asp771. Position 806 is a phosphothreonine (Thr806). Positions Thr899 to Glu997 are disordered. Low complexity predominate over residues Ser914 to Ser952. A phosphoserine mark is found at Ser964 and Ser984. Low complexity predominate over residues Glu980 to Ser989. Residues Leu1004–Ala1029 adopt a coiled-coil conformation. The span at Val1123–Glu1134 shows a compositional bias: basic and acidic residues. A disordered region spans residues Val1123–Gln1157. Residues Ser1129 and Ser1149 each carry the phosphoserine modification. The segment covering Ser1141–Leu1151 has biased composition (low complexity). Residues Leu1166 to Tyr1205 adopt a coiled-coil conformation.

This sequence belongs to the protein kinase superfamily. STE Ser/Thr protein kinase family. MAP kinase kinase kinase subfamily. As to quaternary structure, binds both upstream activators and downstream substrates in multimolecular complexes. Requires Mg(2+) as cofactor.

The enzyme catalyses L-seryl-[protein] + ATP = O-phospho-L-seryl-[protein] + ADP + H(+). It catalyses the reaction L-threonyl-[protein] + ATP = O-phospho-L-threonyl-[protein] + ADP + H(+). Activated by phosphorylation on Thr-806. Catalytically active only when complexed with MAP3K5, with MAP3K5 supporting the stability and the active configuration of MAP3K6 and MAP3K6 activating MAP3K5 by direct phosphorylation. Functionally, component of a protein kinase signal transduction cascade. Activates the JNK, but not ERK or p38 kinase pathways. The sequence is that of Mitogen-activated protein kinase kinase kinase 6 (MAP3K6) from Homo sapiens (Human).